The primary structure comprises 149 residues: Endoribonuclease YbeY (149 aa).

Positions 112, 116, and 122 each coordinate Zn(2+).

It belongs to the endoribonuclease YbeY family. The cofactor is Zn(2+).

It localises to the cytoplasm. Single strand-specific metallo-endoribonuclease involved in late-stage 70S ribosome quality control and in maturation of the 3' terminus of the 16S rRNA. The protein is Endoribonuclease YbeY of Methylibium petroleiphilum (strain ATCC BAA-1232 / LMG 22953 / PM1).